The sequence spans 4146 residues: DNA-dependent protein kinase catalytic subunit (4146 aa).

4 HEAT repeats span residues 308–343, 925–962, 1026–1062, and 1075–1111; these read DDYQSLFEVISKWCGHTNGEMKKLAFAALDSFLKQI, VIYLDMFLPHITELALSTSDRQTKVAACELLHSIVAFM, QDTVALLEAILTGIVDPVDSTLRDFCGQCIQEFLRWS, and PVNTTSLFKRLYSLALHPNAFKRLGAALAFNNIYRDF. TPR repeat units lie at residues 1745–1778 and 1974–2007; these read PMKSDEFPKGTLKFNNYVDCIKKFLDALELSQSP and VFSELKFYQGFLFTEKKEKNLLIFENLIDLQRNY. Residue S2075 is modified to Phosphoserine; by autocatalysis. At T2631 the chain carries Phosphothreonine; by autocatalysis. A Phosphoserine; by autocatalysis modification is found at S2634. A phosphothreonine; by autocatalysis mark is found at T2659 and T2668. The 684-residue stretch at 2873–3556 folds into the FAT domain; the sequence is FIACVQDMCY…VYPFMVSGES (684 aa). In terms of domain architecture, PI3K/PI4K catalytic spans 3739-4071; it reads FDERVSVMAS…IHCAKRKLDG (333 aa). The interval 3745-3751 is G-loop; that stretch reads VMASIRK. Residues 3937–3945 are catalytic loop; sequence GIGDRHLSN. Residues 3957–3982 are activation loop; the sequence is GIDFGHAFGTATQFLPVPELMPFRLT. In terms of domain architecture, FATC spans 4114 to 4146; it reads DGLTEETQVQCLIDQATDPNILGRVWKGWEPWI.

This sequence belongs to the PI3/PI4-kinase family. As to quaternary structure, DNA-PK is a heterotrimer of prkdc and the Ku dimer (composed of xrcc6/Ku70 and xrcc5/Ku86). Component of the core long-range non-homologous end joining (NHEJ) complex (also named DNA-PK complex) composed of prkdc, lig4, xrcc4, xrcc6/ku70, xrcc5/ku86 and nhej1/xlf. Additional component of the NHEJ complex includes paxx. Following autophosphorylation, prkdc dissociates from DNA. Post-translationally, autophosphorylated at two clusters, the T2609 cluster and the S2056 cluster. Autophosphorylated on Ser-2075, Thr-2631, Thr-2659 and Thr-2668. Ser-2075 and Thr-2668 are DNA damage-inducible phosphorylation sites (inducible with ionizing radiation, IR) dephosphorylated by PPP5C. Autophosphorylation induces a conformational change that leads to remodeling of the DNA-PK complex, requisite for efficient end processing and DNA repair. Autophosphorylation in trans within DNA-PK complexes loaded on DNA ends leads to the dissociation of PRKDC from DNA and the transition into the short-range NHEJ complex. Autophosphorylation of the T2609 cluster is required for hematopoietic development and protein synthesis in erythrocytes precursors.

It is found in the nucleus. Its subcellular location is the nucleolus. It catalyses the reaction L-seryl-[protein] + ATP = O-phospho-L-seryl-[protein] + ADP + H(+). It carries out the reaction L-threonyl-[protein] + ATP = O-phospho-L-threonyl-[protein] + ADP + H(+). Its function is as follows. Serine/threonine-protein kinase that acts as a molecular sensor for DNA damage. Involved in DNA nonhomologous end joining (NHEJ) required for double-strand break (DSB) repair and V(D)J recombination. Must be bound to DNA to express its catalytic properties. Promotes processing of hairpin DNA structures in V(D)J recombination by activation of the hairpin endonuclease artemis (DCLRE1C). Recruited by XRCC5 and XRCC6 to DNA ends and is required to (1) protect and align broken ends of DNA, thereby preventing their degradation, (2) and sequester the DSB for repair by NHEJ. Acts as a scaffold protein to aid the localization of DNA repair proteins to the site of damage. The assembly of the DNA-PK complex at DNA ends is also required for the NHEJ ligation step. Found at the ends of chromosomes, suggesting a further role in the maintenance of telomeric stability and the prevention of chromosomal end fusion. As part of the DNA-PK complex, involved in the early steps of ribosome assembly by promoting the processing of precursor rRNA into mature 18S rRNA in the small-subunit processome. Recognizes the substrate consensus sequence [ST]-Q. Phosphorylates 'Ser-139' of histone variant H2AX, thereby regulating DNA damage response mechanism. This is DNA-dependent protein kinase catalytic subunit (prkdc) from Xenopus laevis (African clawed frog).